Reading from the N-terminus, the 111-residue chain is Rubredoxin (111 aa).

Residues 11 to 62 enclose the Rubredoxin-like domain; it reads LDRFECRSCGYVYEPEKGDNKHDIAPETPFAELPINWRCPVCTAKKAAFTNI. Positions 16, 19, 49, and 52 each coordinate Fe cation.

The protein belongs to the rubredoxin family. It depends on Fe(3+) as a cofactor.

Rubredoxin is a small nonheme, iron protein lacking acid-labile sulfide. Its single Fe, chelated to 4 Cys, functions as an electron acceptor and may also stabilize the conformation of the molecule. Could be involved in hydrogenase-linked redox processes. This Nostoc sp. (strain PCC 7120 / SAG 25.82 / UTEX 2576) protein is Rubredoxin (rub).